Here is a 96-residue protein sequence, read N- to C-terminus: Large ribosomal subunit protein bL27 (96 aa).

The propeptide occupies 1-9 (MLRLDLQFF).

This sequence belongs to the bacterial ribosomal protein bL27 family. Post-translationally, the N-terminus is cleaved by ribosomal processing cysteine protease Prp.

The protein is Large ribosomal subunit protein bL27 of Geobacillus sp. (strain WCH70).